The chain runs to 397 residues: Lysophospholipid transporter LplT (397 aa).

Topologically, residues 1–17 (MSESVHTNTSLWSKGMK) are periplasmic. The helical transmembrane segment at 18 to 38 (AVIVAQFLSAFGDNALLFATL) threads the bilayer. The Cytoplasmic segment spans residues 39–52 (ALLKAQFYPEWSQP). A helical transmembrane segment spans residues 53–73 (ILQMVFVGAYILFAPFVGQVA). Topologically, residues 74–90 (DSFAKGRVMMFANGLKL) are periplasmic. Residues 91–111 (LGAASICFGINPFLGYTLVGV) form a helical membrane-spanning segment. Over 112 to 144 (GAAAYSPAKYGILGELTTGSKLVKANGLMEAST) the chain is Cytoplasmic. The chain crosses the membrane as a helical span at residues 145 to 165 (IAAILLGSVAGGVLADWHVLV). Residue alanine 166 is a topological domain, periplasmic. The chain crosses the membrane as a helical span at residues 167–187 (LAACALAYGGAVVANIYIPKL). The Cytoplasmic segment spans residues 188 to 226 (AAARPGQSWNLINMTRSFLNACTSLWRNGETRFSLVGTS). A helical transmembrane segment spans residues 227 to 247 (LFWGAGVTLRFLLVLWVPVAL). The Periplasmic portion of the chain corresponds to 248–256 (GITDNATPT). The chain crosses the membrane as a helical span at residues 257–277 (YLNAMVAIGIVVGAGAAAKLV). The Cytoplasmic portion of the chain corresponds to 278–280 (TLE). The helical transmembrane segment at 281-301 (TVSRCMPAGILIGVVVLIFSL) threads the bilayer. Over 302–304 (QHE) the chain is Periplasmic. Residues 305–325 (QLPAYALLMLIGVLGGFFVVP) traverse the membrane as a helical segment. Topologically, residues 326 to 343 (LNALLQERGKKSVGAGNA) are cytoplasmic. The helical transmembrane segment at 344-364 (IAVQNLGENSAMLLMLGIYSL) threads the bilayer. At 365-366 (AV) the chain is on the periplasmic side. Residues 367-387 (MVGIPVVPIGIGFGALFALAI) form a helical membrane-spanning segment. The Cytoplasmic segment spans residues 388–397 (TALWIWQRRH).

Belongs to the major facilitator superfamily. LplT (TC 2.A.1.42) family.

The protein localises to the cell inner membrane. Catalyzes the facilitated diffusion of 2-acyl-glycero-3-phosphoethanolamine (2-acyl-GPE) into the cell. The chain is Lysophospholipid transporter LplT from Escherichia coli O157:H7 (strain EC4115 / EHEC).